A 542-amino-acid chain; its full sequence is CTP synthase (542 aa).

The interval 1–265 is amidoligase domain; that stretch reads MARYVFITGG…DNEVLAAFGI (265 aa). A CTP-binding site is contributed by Ser-13. Ser-13 is a UTP binding site. Residues 14 to 19 and Asp-71 each bind ATP; that span reads SLGKGI. Mg(2+)-binding residues include Asp-71 and Glu-139. CTP contacts are provided by residues 146–148, 186–191, and Lys-222; these read DIE and KTKPTQ. Residues 186–191 and Lys-222 contribute to the UTP site; that span reads KTKPTQ. The Glutamine amidotransferase type-1 domain maps to 291–541; sequence TIAIVGKYTG…IEAALEQSRL (251 aa). Residue Gly-353 participates in L-glutamine binding. Residue Cys-380 is the Nucleophile; for glutamine hydrolysis of the active site. L-glutamine contacts are provided by residues 381-384, Glu-404, and Arg-469; that span reads FGMQ. Residues His-514 and Glu-516 contribute to the active site.

Belongs to the CTP synthase family. In terms of assembly, homotetramer.

It catalyses the reaction UTP + L-glutamine + ATP + H2O = CTP + L-glutamate + ADP + phosphate + 2 H(+). The catalysed reaction is L-glutamine + H2O = L-glutamate + NH4(+). The enzyme catalyses UTP + NH4(+) + ATP = CTP + ADP + phosphate + 2 H(+). It functions in the pathway pyrimidine metabolism; CTP biosynthesis via de novo pathway; CTP from UDP: step 2/2. Allosterically activated by GTP, when glutamine is the substrate; GTP has no effect on the reaction when ammonia is the substrate. The allosteric effector GTP functions by stabilizing the protein conformation that binds the tetrahedral intermediate(s) formed during glutamine hydrolysis. Inhibited by the product CTP, via allosteric rather than competitive inhibition. Catalyzes the ATP-dependent amination of UTP to CTP with either L-glutamine or ammonia as the source of nitrogen. Regulates intracellular CTP levels through interactions with the four ribonucleotide triphosphates. This chain is CTP synthase, found in Rhizobium meliloti (strain 1021) (Ensifer meliloti).